An 81-amino-acid polypeptide reads, in one-letter code: Exodeoxyribonuclease 7 small subunit (81 aa).

Residues 59 to 81 (KLVDKDGNEKTLDPQNASAPEEE) are disordered. Residues 60-70 (LVDKDGNEKTL) show a composition bias toward basic and acidic residues. Over residues 71 to 81 (DPQNASAPEEE) the composition is skewed to polar residues.

The protein belongs to the XseB family. Heterooligomer composed of large and small subunits.

The protein localises to the cytoplasm. The catalysed reaction is Exonucleolytic cleavage in either 5'- to 3'- or 3'- to 5'-direction to yield nucleoside 5'-phosphates.. Functionally, bidirectionally degrades single-stranded DNA into large acid-insoluble oligonucleotides, which are then degraded further into small acid-soluble oligonucleotides. The chain is Exodeoxyribonuclease 7 small subunit from Lactobacillus gasseri (strain ATCC 33323 / DSM 20243 / BCRC 14619 / CIP 102991 / JCM 1131 / KCTC 3163 / NCIMB 11718 / NCTC 13722 / AM63).